Here is a 150-residue protein sequence, read N- to C-terminus: Deoxyuridine 5'-triphosphate nucleotidohydrolase (150 aa).

Residues 69 to 71 (RSG), asparagine 82, 86 to 88 (LID), and lysine 96 contribute to the substrate site.

Belongs to the dUTPase family. The cofactor is Mg(2+).

The catalysed reaction is dUTP + H2O = dUMP + diphosphate + H(+). It functions in the pathway pyrimidine metabolism; dUMP biosynthesis; dUMP from dCTP (dUTP route): step 2/2. Functionally, this enzyme is involved in nucleotide metabolism: it produces dUMP, the immediate precursor of thymidine nucleotides and it decreases the intracellular concentration of dUTP so that uracil cannot be incorporated into DNA. The protein is Deoxyuridine 5'-triphosphate nucleotidohydrolase of Neisseria gonorrhoeae (strain NCCP11945).